The chain runs to 230 residues: uncharacterized protein (230 aa).

Residues 7–23 (LFTASILSLGYLVFICG) form a helical membrane-spanning segment. Residues 27–230 (KPKPTASTES…VKTEGTLKKN (204 aa)) are disordered. Over residues 50-59 (AVPQKPAAPA) the composition is skewed to low complexity. Residues 60–83 (AEEKAPVDPKDPKSKDVDEAKKPD) show a composition bias toward basic and acidic residues. Residues 101 to 112 (KKSKKSEKSKKK) show a composition bias toward basic residues. Residues 113–173 (KTEEKVMSED…KEKSKDETVP (61 aa)) are compositionally biased toward basic and acidic residues. A compositionally biased stretch (acidic residues) spans 199 to 210 (ETDEFPTIDEDA). Residues 211 to 230 (EKTKKTEKKDVKTEGTLKKN) show a composition bias toward basic and acidic residues.

The protein resides in the membrane. This is an uncharacterized protein from Caenorhabditis elegans.